A 628-amino-acid polypeptide reads, in one-letter code: (+)-alpha pinene synthase 1, chloroplastic (628 aa).

Mg(2+) contacts are provided by aspartate 379, aspartate 383, and aspartate 531. Residues 379–383 (DDIYD) carry the DDXXD motif motif.

The protein belongs to the terpene synthase family. Tpsd subfamily. Mg(2+) serves as cofactor. Requires Mn(2+) as cofactor.

It is found in the plastid. It localises to the chloroplast. It carries out the reaction (2E)-geranyl diphosphate = (1R,5R)-alpha-pinene + diphosphate. It functions in the pathway terpene metabolism; oleoresin biosynthesis. Its pathway is secondary metabolite biosynthesis; terpenoid biosynthesis. Its function is as follows. Monoterpene synthase (TPS) involved in the biosynthesis of monoterpene natural products included in conifer oleoresin secretions and volatile emissions; these compounds contribute to biotic and abiotic stress defense against herbivores and pathogens. Catalyzes the conversion of (2E)-geranyl diphosphate (GPP) to (+)-alpha-pinene. The chain is (+)-alpha pinene synthase 1, chloroplastic from Pinus contorta (Shore pine).